A 550-amino-acid polypeptide reads, in one-letter code: Beta-fructofuranosidase, insoluble isoenzyme CWINV6 (550 aa).

Substrate is bound by residues Trp-28–Asp-31, Gln-47, Trp-92–Ser-93, Arg-157–Asp-158, and Glu-214. Asp-31 is an active-site residue. N-linked (GlcNAc...) asparagine glycosylation is found at Asn-235 and Asn-272.

It belongs to the glycosyl hydrolase 32 family. As to expression, expressed in seedlings and leaves, and, to a lower extent, in flowers and seeds.

The protein resides in the secreted. The protein localises to the extracellular space. Its subcellular location is the apoplast. It is found in the cell wall. The catalysed reaction is Hydrolysis of terminal, non-reducing (2-&gt;1)- and (2-&gt;6)-linked beta-D-fructofuranose residues in fructans.. Functionally, 6 and 1-fructan exohydrolase that can degrade both inulin and levan-type fructans, such as phlein, levan, neokestose, levanbiose, 6-kestose, 1-kestose, inulin, and 1,1-nystose. This Arabidopsis thaliana (Mouse-ear cress) protein is Beta-fructofuranosidase, insoluble isoenzyme CWINV6 (CWINV6).